Here is a 199-residue protein sequence, read N- to C-terminus: Ribonuclease HII (199 aa).

The region spanning 10 to 199 (HLVAGVDEVG…VKRALGLASN (190 aa)) is the RNase H type-2 domain. A divalent metal cation contacts are provided by D16, E17, and D108.

The protein belongs to the RNase HII family. Mn(2+) serves as cofactor. It depends on Mg(2+) as a cofactor.

The protein localises to the cytoplasm. The enzyme catalyses Endonucleolytic cleavage to 5'-phosphomonoester.. Functionally, endonuclease that specifically degrades the RNA of RNA-DNA hybrids. This Klebsiella pneumoniae (strain 342) protein is Ribonuclease HII.